A 436-amino-acid polypeptide reads, in one-letter code: MPGVTKEEPQLDLAIIGGGITGLSLAAGLLSRNIHVTIYERARQFREIGAGIGFTPNAERSMIALDPRVHAAFKNVATPNETDLFRWVDGYTHYSDERYEELLFETDLGKRGFEGCHRAQFLDELVKLIPEKNVRLGKTLRRVTEKVDGEKLLLEFEDGSTAEADAVIGCDGIRSRVRQLILGEDNPASYPRYSHKSAFRGLVPMDRAVDAMGREKALTRHMHLGQDAHVLTFPVAMGKLLNVVAFVTDPGEWPHEEKLSAPASKEEAVQAFSGFGHVVRAVMDLLPDTLDRWAVFDTYDHPASTYVRGRMCIAGDAAHASSPHHGAGAGTGIEDAAVLAAVLAAASETASSLAKTKAEALRAALATYDAIRLERSQWVVQSSRILGELYEWQYEPTGRDAAKCGAEVYWRSHQIWDYDVDDMLRRTAEDYRRRLE.

FAD-binding residues include Glu40, Gly53, and Arg118. Residue Arg200 is part of the active site. FAD is bound by residues Asp316 and Ala329.

This sequence belongs to the paxM FAD-dependent monooxygenase family. Requires FAD as cofactor.

Its pathway is secondary metabolite biosynthesis. Functionally, FAD-dependent monooxygenase; part of the gene cluster that mediates the biosynthesis of azaphilone pigments (MonAzPs), a complex mixture of compounds with a common azaphilone skeleton very widely used as food colorants. Within the pathway, pigN hydroxylates the benzaldehyde M7PKS-1 intermediate at C-4 to form the pyran ring. The first step of the pathway is performed by the nrPKS pigA that forms the hexaketide precursor from successive condensations of five malonyl-CoA units, with a simple acetyl-CoA starter unit. The role of esterase pigG is not clear, but it may play at most a supplementary role in the formation of the benzaldehyde produced by the pigA nrPKS. This very reactive benzaldehyde is intercepted by the pigC ketoreductase that to provide the first stable enzyme-free MonAzPs intermediate, 6-(4-hydroxy-2-oxopentyl)-3-methyl-2,4-dioxocyclohexane carbaldehyde, also known as M7PKS-1. The FAD-dependent monooxygenase pigN hydroxylates M7PKS-1 at C-4, which triggers the formation of the pyran ring. PigJ, pigK and pigD are involved in the acetylation of the pyran ring. PigJ and pigK form the two subunits of a dedicated fungal FAS that produces the side chain fatty acyl moiety of MonAzPs and pigD transfers the fatty acyl chain to the C-4 alcohol. PigM and pigO are involved in the elimination of the omega-1 alcohol. PigM acts as an O-acetyltransferase that synthesizes the putative O-11 acetyl intermediate whereas pigO eliminates acetic acid to yield an intermediate with a C10(11) double bond. The dehydration of the C-11 alcohol followed by the reduction of the C6(7) double bond by the NAD(P)H-dependent oxidoreductase pigE increases the electrophilicity of the C-5 ketone of the resulting acyl benzopyran. This in turn sets up the C-5 ketone for an intramolecular Knoevenagel aldol condensation with the C-20 enol of the side chain. This condensation affords the characteristic linear tricyclic carbon skeletons of the yellow pigments that serve as the common precursors for the classical yellow pigments monascin and ankaflavin, orange pigments rubopunctatin and monascorubrin, and red pigments ribropunctamine and monascorubramine. The FAD-dependent oxidoreductase pigF is especially invoved in the biosynthesis of orange and red pigments via desaturation of C6(7). This chain is FAD-dependent monooxygenase pigN, found in Monascus ruber (Mold).